Reading from the N-terminus, the 144-residue chain is Large ribosomal subunit protein uL15 (144 aa).

The interval 1–57 is disordered; that stretch reads MRFNELQPAKGSRFAGKRLGRGIGSGLGKTSGKGHKGQKARSGGYHKVGFEGGQMPL. Positions 21-31 are enriched in gly residues; that stretch reads RGIGSGLGKTS.

The protein belongs to the universal ribosomal protein uL15 family. In terms of assembly, part of the 50S ribosomal subunit.

In terms of biological role, binds to the 23S rRNA. In Dichelobacter nodosus (strain VCS1703A), this protein is Large ribosomal subunit protein uL15.